Here is a 1226-residue protein sequence, read N- to C-terminus: MDNRRSLAQPSFSNKVIDTNELKNLIVWAFRNYGIARAANMADKLKDLGFHYATQAGISLSLEDLRIPPSKQSLLLGTIEDIKATENKYRRGEITAVERFQKVIDTWNNASESLKQEVIKYFKETDPLNAVSMMAFSGARGNISQVRQLVGMRGLMADPQGQIIDLPISSNFREGLTVTDYFISSYGARKGLVDTALRTADSGYLTRRLVDVSQDVIIREVDCKTNKGIILEDLVDTQKILINLEQALSGRVLAENVFHPETNCLIAHTNQDVSPKLAKEITKAGIKKVLVRSPVTCNSRSSVCQYCYGWNLAHGRLVDLGEAVGIIAAQSIGEPGTQLTMRTFHTGGVFTGELAEQIYAPIDGQLIDLDIESYTDVRTRHGEQALITKKPTQVTIRSKKNQKSIINLSKGTTLLICDGELVSKDQVIAESPRRNRLMTERAQKHVVSDLSGKICFSNLTVEETDNNQYTTRITKTGGLIWVLSGEVYSISDSANVIVHKEDKTKAGTILAQTELINHYAGEVRIHQNTNSSITNIQVITESIVIPGCYIYTDVIHKKESYILETEKKQKFLFKAIPNQKIQDGYTVAELISDTYKTTSGGIIKYLDLNVSKKKTGLDKDAYEILSPGYILWISEETHEINKDSSLILVHNGDVIESGTELVKNIFSKSSGIAEIIEKDGIVREIIIKPGSIYKLSEVYSNNDKSRGFLRPGERLHNNISTDKLVYWEYIENEQMPYILIRPVIVYSIPETKSSLIENLVSQKPSQTKLKLVKRTPFRDGERVKSIEGVHLVTTNLVAEIEHRDDNLISSIEFSAKESGNNYFDLRLSTFETLSIKSIDVNKSEKQQSQTRIIVKNGEYIKPFTVVASTEIIAMSEGTVEEIYSEKNTSRRILIATSSDKKTFNIGKSTVKVSVGDWIRCGDFITENMTSLDSGQIIEISSRSVTLRIARPYLVSNGAILHVDNNALIRRGETLAILVFDRAKTGDIIQGLPRIEEILEARKKTDVLLNPHDILDASFDLYIECGLALYEAARLSFQEIQLLLVKEVQLVYQSQGVNISDKHVEVIVRQMTSKVKIENGEETGYLPGELVELQKIEQTNKAITLRNKINASYRPVLLGITQASLNTESFISAASFQETTKVLTEAAISGKLDWLRGLKENVIIGRLIPAGTGFNMYDNCNGSSLEKKNLTANTNDESTISSVRDDLDDIILDDRTARNYFSNKSVE.

4 residues coordinate Zn(2+): C223, C297, C304, and C307.

It belongs to the RNA polymerase beta' chain family. RpoC2 subfamily. In terms of assembly, in plastids the minimal PEP RNA polymerase catalytic core is composed of four subunits: alpha, beta, beta', and beta''. When a (nuclear-encoded) sigma factor is associated with the core the holoenzyme is formed, which can initiate transcription. Requires Zn(2+) as cofactor.

The protein localises to the plastid. It localises to the chloroplast. It catalyses the reaction RNA(n) + a ribonucleoside 5'-triphosphate = RNA(n+1) + diphosphate. In terms of biological role, DNA-dependent RNA polymerase catalyzes the transcription of DNA into RNA using the four ribonucleoside triphosphates as substrates. This chain is DNA-directed RNA polymerase subunit beta'', found in Pyropia yezoensis (Susabi-nori).